Reading from the N-terminus, the 77-residue chain is MKLIIFTGLVLFAIVSLIEAQAENEKACLPQYQVCTDAPGNCCSDLVCDCYGRYKCGARIGRNCFCLQKGVIYKRED.

A signal peptide spans 1-20 (MKLIIFTGLVLFAIVSLIEA). The propeptide occupies 21–26 (QAENEK).

The protein belongs to the neurotoxin 19 (CSTX) family. 08 (U8-Lctx) subfamily. Post-translationally, contains 4 disulfide bonds. In terms of tissue distribution, expressed by the venom gland.

It localises to the secreted. The protein is U8-lycotoxin-Ls1r of Lycosa singoriensis (Wolf spider).